Reading from the N-terminus, the 148-residue chain is SsrA-binding protein (148 aa).

It belongs to the SmpB family.

The protein localises to the cytoplasm. Required for rescue of stalled ribosomes mediated by trans-translation. Binds to transfer-messenger RNA (tmRNA), required for stable association of tmRNA with ribosomes. tmRNA and SmpB together mimic tRNA shape, replacing the anticodon stem-loop with SmpB. tmRNA is encoded by the ssrA gene; the 2 termini fold to resemble tRNA(Ala) and it encodes a 'tag peptide', a short internal open reading frame. During trans-translation Ala-aminoacylated tmRNA acts like a tRNA, entering the A-site of stalled ribosomes, displacing the stalled mRNA. The ribosome then switches to translate the ORF on the tmRNA; the nascent peptide is terminated with the 'tag peptide' encoded by the tmRNA and targeted for degradation. The ribosome is freed to recommence translation, which seems to be the essential function of trans-translation. This Ehrlichia ruminantium (strain Welgevonden) protein is SsrA-binding protein.